A 102-amino-acid polypeptide reads, in one-letter code: Acid shock protein (102 aa).

A signal peptide spans 1 to 21 (MKKVLALVVAAAMGLSSAAFA). A compositionally biased stretch (low complexity) spans 21–41 (AAETTTTPAPTATTTKAAPAK). Residues 21-102 (AAETTTTPAP…PAKPAAQPAA (82 aa)) are disordered. A propeptide spanning residues 22–58 (AETTTTPAPTATTTKAAPAKTTHHKKQHKAAPAQKAQ) is cleaved from the precursor. A compositionally biased stretch (basic residues) spans 80 to 90 (AAKKHAKKHSH). Low complexity predominate over residues 91–102 (QQPAKPAAQPAA).

The protein belongs to the Asr family. Post-translationally, proteolytic processing gives rise to the active protein.

The protein localises to the periplasm. Required for growth and/or survival at acidic conditions. This is Acid shock protein from Escherichia coli (strain K12 / MC4100 / BW2952).